Reading from the N-terminus, the 95-residue chain is Small ribosomal subunit protein bS6 (95 aa).

The protein belongs to the bacterial ribosomal protein bS6 family.

In terms of biological role, binds together with bS18 to 16S ribosomal RNA. The protein is Small ribosomal subunit protein bS6 of Bacillus licheniformis (strain ATCC 14580 / DSM 13 / JCM 2505 / CCUG 7422 / NBRC 12200 / NCIMB 9375 / NCTC 10341 / NRRL NRS-1264 / Gibson 46).